The chain runs to 1134 residues: Centrosomal protein of 131 kDa (1134 aa).

Disordered stretches follow at residues 111-131 (NSSE…EEGE), 168-208 (DLPG…PLTL), 286-306 (ESSK…APSS), 425-455 (VGKK…TINP), and 492-528 (DQKQ…EDSR). Over residues 180 to 196 (MHADLDSSDCDNDKQEV) the composition is skewed to basic and acidic residues. The span at 494-504 (KQYDGKHKPGL) shows a compositional bias: basic and acidic residues. The span at 513 to 522 (NDTASQLSLK) shows a compositional bias: polar residues. A coiled-coil region spans residues 732–1131 (LESQNQAWEH…AVIRQQRKDY (400 aa)).

Belongs to the CEP131 family. Expressed in chordotonal (Ch) neuronal precursors. Expressed in ciliated cells, like sensory neurons and spermatids.

Its subcellular location is the cytoplasm. It is found in the cytoskeleton. It localises to the microtubule organizing center. The protein resides in the centrosome. The protein localises to the cilium basal body. Its subcellular location is the centriole. Its function is as follows. Cilium-specific protein with a role in cilium/flagellum formation. May be involved in transport of components into the growing cilium. In germ cells and sensory neurons, plays a role with Cby in the building of the transition zone necessary for the formation of the ciliary cap and for the correct elongation of the axoneme. The polypeptide is Centrosomal protein of 131 kDa (Drosophila melanogaster (Fruit fly)).